A 381-amino-acid polypeptide reads, in one-letter code: GDP-mannose-dependent monoacylated alpha-(1-6)-phosphatidylinositol monomannoside mannosyltransferase (381 aa).

GDP-alpha-D-mannose contacts are provided by Arg-206, Lys-211, Leu-261, and Glu-298.

The protein belongs to the glycosyltransferase group 1 family. Glycosyltransferase 4 subfamily.

The catalysed reaction is a 1,2-diacyl-sn-glycero-3-phospho-[alpha-D-mannopyranosyl-(1&lt;-&gt;6)-D-myo-inositol] + GDP-alpha-D-mannose = a 2,6-O-bis(alpha-D-mannopyranosyl)-1-phosphatidyl-1D-myo-inositol + GDP + H(+). It carries out the reaction a 1,2-diacyl-sn-glycero-3-phospho-[alpha-D-6-acyl-mannopyranosyl-(1&lt;-&gt;6)-D-myo-inositol] + GDP-alpha-D-mannose = a 2-O-(alpha-D-mannosyl)-6-O-(6-O-acyl-alpha-D-mannosyl)-1-phosphatidyl-1D-myo-inositol + GDP + H(+). The protein operates within phospholipid metabolism; phosphatidylinositol metabolism. In terms of biological role, involved in the biosynthesis of phosphatidyl-myo-inositol mannosides (PIM) which are early precursors in the biosynthesis of lipomannans (LM) and lipoarabinomannans (LAM). Catalyzes the addition of a mannosyl residue from GDP-D-mannose (GDP-Man) to the position 6 of a phosphatidyl-myo-inositol bearing an alpha-1,2-linked mannose residue (PIM1) to generate phosphatidyl-myo-inositol bearing alpha-1,2- and alpha-1,6-linked mannose residues (Ac1PIM2). PimB also catalyzes the addition of a mannosyl residue from GDP-Man to the position 6 of phosphatidyl-myo-inositol bearing an acylated alpha-1,2-linked mannose residue (Ac1PIM1) to generate monoacylated phosphatidyl-myo-inositol bearing alpha-1,2- and alpha-1,6-linked mannose residues (Ac1PIM2). The addition of the second mannosyl residue by PimB preferentially occurs before the acylation of the mannosyl residue transferred by PimA. Also able to transfer a mannosyl residue from GDP-Man to the position 6 of a phosphatidyl-myo-inositol (PI), but this reaction is very slow. In Corynebacterium glutamicum (strain ATCC 13032 / DSM 20300 / JCM 1318 / BCRC 11384 / CCUG 27702 / LMG 3730 / NBRC 12168 / NCIMB 10025 / NRRL B-2784 / 534), this protein is GDP-mannose-dependent monoacylated alpha-(1-6)-phosphatidylinositol monomannoside mannosyltransferase.